The following is a 161-amino-acid chain: Regulator of ribonuclease activity A (161 aa).

The protein belongs to the RraA family. Homotrimer. Binds to both RNA-binding sites in the C-terminal region of Rne and to RhlB.

It localises to the cytoplasm. In terms of biological role, globally modulates RNA abundance by binding to RNase E (Rne) and regulating its endonucleolytic activity. Can modulate Rne action in a substrate-dependent manner by altering the composition of the degradosome. Modulates RNA-binding and helicase activities of the degradosome. The chain is Regulator of ribonuclease activity A from Escherichia fergusonii (strain ATCC 35469 / DSM 13698 / CCUG 18766 / IAM 14443 / JCM 21226 / LMG 7866 / NBRC 102419 / NCTC 12128 / CDC 0568-73).